Here is a 151-residue protein sequence, read N- to C-terminus: 3-hydroxyacyl-[acyl-carrier-protein] dehydratase FabZ (151 aa).

The active site involves His-54.

This sequence belongs to the thioester dehydratase family. FabZ subfamily.

It is found in the cytoplasm. The catalysed reaction is a (3R)-hydroxyacyl-[ACP] = a (2E)-enoyl-[ACP] + H2O. Functionally, involved in unsaturated fatty acids biosynthesis. Catalyzes the dehydration of short chain beta-hydroxyacyl-ACPs and long chain saturated and unsaturated beta-hydroxyacyl-ACPs. This chain is 3-hydroxyacyl-[acyl-carrier-protein] dehydratase FabZ, found in Blochmanniella pennsylvanica (strain BPEN).